Here is a 1755-residue protein sequence, read N- to C-terminus: MESQQLSQHSPISHGSACASVTSKEVHTNQDPLDVSASKTEECEKASTKANSQQTTTPASSAVPENPHHASPQPASVPPPQNGPYPQQCMMTQNQANPSGWSFYGHPSMIPYTPYQMSPMYFPPGPQSQFPQYPSSVGTPLSTPSPESGNTFTDSSSADSDMTSTKKYVRPPPMLTSPNDFPNWVKTYIKFLQNSNLGGIIPTVNGKPVRQITDDELTFLYNTFQIFAPSQFLPTWVKDILSVDYTDIMKILSKSIEKMQSDTQEANDIVTLANLQYNGSTPADAFETKVTNIIDRLNNNGIHINNKVACQLIMRGLSGEYKFLRYTRHRHLNMTVAELFLDIHAIYEEQQGSRNSKPNYRRNLSDEKNDSRSYTNTTKPKVIARNPQKTNNSKSKTARAHNVSTSNNSPSTDNDSISKSTTEPIQLNNKHDLHLGQELTESTVNHTNHSDDELPGHLLLDSGASRTLIRSAHHIHSASSNPDINVVDAQKRNIPINAIGDLQFHFQDNTKTSIKVLHTPNIAYDLLSLNELAAVDITACFTKNVLERSDGTVLAPIVQYGDFYWVSKRYLLPSNISVPTINNVHTSESTRKYPYPFIHRMLAHANAQTIRYSLKNNTITYFNESDVDWSSAIDYQCPDCLIGKSTKHRHIKGSRLKYQNSYEPFQYLHTDIFGPVHNLPNSAPSYFISFTDETTKFRWVYPLHDRREDSILDVFTTILAFIKNQFQASVLVIQMDRGSEYTNRTLHKFLEKNGITPCYTTTADSRAHGVAERLNRTLLDDCRTQLQCSGLPNYLWFSAIEFSTIVRNSLASPKSKKSARQHAGLAGLDISTLLPFGQPVIVNDHNPNSKIHPRGIPGYALHPSRNSYGYIIYLPSLKKTVDTTNYVILQGKESRLDQFNYDALTFDEDLNRLTASYHSFIASNEIQESNDLNIESDHDFQSDIELHPEQPRNVLSKAVSPTDSTPPSTHTEDSKRVSKTNIRAPREVDPNISESNILPSKKRSSTPQISNIESTGSGGMHKLNVPLLAPMSQSNTHESSHASKSKDFRHSDSYSENETNHTNVPISSTGGTNNKTVPQISDQETEKRIIHRSPSIDASPPENNSSHNIVPIKTPTTVSEQNTEESIIADLPLPDLPPESPTEFPDPFKELPPINSRQTNSSLGGIGDSNAYTTINSKKRSLEDNETEIKVSRDTWNTKNMRSLEPPRSKKRIHLIAAVKAVKSIKPIRTTLRYDEAITYNKDIKEKEKYIEAYHKEVNQLLKMKTWDTDEYYDRKEIDPKRVINSMFIFNKKRDGTHKARFVARGDIQHPDTYDSGMQSNTVHHYALMTSLSLALDNNYYITQLDISSAYLYADIKEELYIRPPPHLGMNDKLIRLKKSLYGLKQSGANWYETIKSYLIQQCGMEEVRGWSCVFKNSQVTICLFVDDMVLFSKNLNSNKRIIEKLKMQYDTKIINLGESDEEIQYDILGLEIKYQRGKYMKLGMENSLTEKIPKLNVPLNPKGRKLSAPGQPGLYIDQDELEIDEDEYKEKVHEMQKLIGLASYVGYKFRFDLLYYINTLAQHILFPSRQVLDMTYELIQFMWDTRDKQLIWHKNKPTKPDNKLVAISDASYGNQPYYKSQIGNIFLLNGKVIGGKSTKASLTCTSTTEAEIHAVSEAIPLLNNLSHLVQELNKKPIIKGLLTDSRSTISIIKSTNEEKFRNRFFGTKAMRLRDEVSGNNLYVYYIETKKNIADVMTKPLPIKTFKLLTNKWIH.

3 stretches are compositionally biased toward polar residues: residues 1–23 (MESQ…SVTS), 48–60 (TKAN…TPAS), and 127–152 (QSQF…GNTF). 3 disordered regions span residues 1 to 93 (MESQ…MMTQ), 126 to 174 (PQSQ…PPPM), and 352 to 421 (GSRN…SKST). The span at 153–165 (TDSSSADSDMTST) shows a compositional bias: low complexity. Residues 299 to 401 (NNGIHINNKV…NSKSKTARAH (103 aa)) form an RNA-binding region. Residues 402 to 418 (NVSTSNNSPSTDNDSIS) show a composition bias toward low complexity. Ser-416 bears the Phosphoserine mark. Catalysis depends on Asp-461, which acts as the For protease activity; shared with dimeric partner. The segment at 583–640 (NVHTSESTRKYPYPFIHRMLAHANAQTIRYSLKNNTITYFNESDVDWSSAIDYQCPDC) is integrase-type zinc finger-like. The region spanning 660-835 (NSYEPFQYLH…AGLDISTLLP (176 aa)) is the Integrase catalytic domain. Mg(2+) contacts are provided by Asp-671 and Asp-736. 3 disordered regions span residues 956–1087 (SKAV…ETEK), 1092–1111 (RSPS…NIVP), and 1130–1187 (DLPL…DNET). Residues 960–969 (SPTDSTPPST) show a composition bias toward low complexity. Residues 1005 to 1015 (STPQISNIEST) are compositionally biased toward polar residues. Over residues 1038–1053 (ESSHASKSKDFRHSDS) the composition is skewed to basic and acidic residues. 2 stretches are compositionally biased toward polar residues: residues 1054–1082 (YSEN…QISD) and 1101–1111 (PENNSSHNIVP). The short motif at 1178–1212 (KKRSLEDNETEIKVSRDTWNTKNMRSLEPPRSKKR) is the Bipartite nuclear localization signal element. Residues 1338–1476 (NNYYITQLDI…DILGLEIKYQ (139 aa)) form the Reverse transcriptase Ty1/copia-type domain. Positions 1346, 1427, 1428, 1610, 1652, and 1685 each coordinate Mg(2+). The RNase H Ty1/copia-type domain maps to 1610–1752 (DASYGNQPYY…IKTFKLLTNK (143 aa)).

In terms of assembly, the capsid protein forms a homotrimer, from which the VLPs are assembled. The protease is a homodimer, whose active site consists of two apposed aspartic acid residues. In terms of processing, initially, virus-like particles (VLPs) are composed of the structural unprocessed proteins Gag and Gag-Pol, and also contain the host initiator methionine tRNA (tRNA(i)-Met) which serves as a primer for minus-strand DNA synthesis, and a dimer of genomic Ty RNA. Processing of the polyproteins occurs within the particle and proceeds by an ordered pathway, called maturation. First, the protease (PR) is released by autocatalytic cleavage of the Gag-Pol polyprotein yielding capsid protein p45 and a Pol-p154 precursor protein. This cleavage is a prerequisite for subsequent processing of Pol-p154 at the remaining sites to release the mature structural and catalytic proteins. Maturation takes place prior to the RT reaction and is required to produce transposition-competent VLPs.

It localises to the cytoplasm. It is found in the nucleus. It carries out the reaction DNA(n) + a 2'-deoxyribonucleoside 5'-triphosphate = DNA(n+1) + diphosphate. It catalyses the reaction Endonucleolytic cleavage to 5'-phosphomonoester.. Its function is as follows. Capsid protein (CA) is the structural component of the virus-like particle (VLP), forming the shell that encapsulates the retrotransposons dimeric RNA genome. The particles are assembled from trimer-clustered units and there are holes in the capsid shells that allow for the diffusion of macromolecules. CA also has nucleocapsid-like chaperone activity, promoting primer tRNA(i)-Met annealing to the multipartite primer-binding site (PBS), dimerization of Ty1 RNA and initiation of reverse transcription. In terms of biological role, the aspartyl protease (PR) mediates the proteolytic cleavages of the Gag and Gag-Pol polyproteins after assembly of the VLP. Functionally, reverse transcriptase/ribonuclease H (RT) is a multifunctional enzyme that catalyzes the conversion of the retro-elements RNA genome into dsDNA within the VLP. The enzyme displays a DNA polymerase activity that can copy either DNA or RNA templates, and a ribonuclease H (RNase H) activity that cleaves the RNA strand of RNA-DNA heteroduplexes during plus-strand synthesis and hydrolyzes RNA primers. The conversion leads to a linear dsDNA copy of the retrotransposon that includes long terminal repeats (LTRs) at both ends. Integrase (IN) targets the VLP to the nucleus, where a subparticle preintegration complex (PIC) containing at least integrase and the newly synthesized dsDNA copy of the retrotransposon must transit the nuclear membrane. Once in the nucleus, integrase performs the integration of the dsDNA into the host genome. The polypeptide is Transposon Ty1-DR6 Gag-Pol polyprotein (TY1B-DR6) (Saccharomyces cerevisiae (strain ATCC 204508 / S288c) (Baker's yeast)).